The primary structure comprises 252 residues: Imidazole glycerol phosphate synthase subunit HisF (252 aa).

Active-site residues include Asp-11 and Asp-130.

It belongs to the HisA/HisF family. Heterodimer of HisH and HisF.

Its subcellular location is the cytoplasm. It catalyses the reaction 5-[(5-phospho-1-deoxy-D-ribulos-1-ylimino)methylamino]-1-(5-phospho-beta-D-ribosyl)imidazole-4-carboxamide + L-glutamine = D-erythro-1-(imidazol-4-yl)glycerol 3-phosphate + 5-amino-1-(5-phospho-beta-D-ribosyl)imidazole-4-carboxamide + L-glutamate + H(+). It functions in the pathway amino-acid biosynthesis; L-histidine biosynthesis; L-histidine from 5-phospho-alpha-D-ribose 1-diphosphate: step 5/9. Functionally, IGPS catalyzes the conversion of PRFAR and glutamine to IGP, AICAR and glutamate. The HisF subunit catalyzes the cyclization activity that produces IGP and AICAR from PRFAR using the ammonia provided by the HisH subunit. The polypeptide is Imidazole glycerol phosphate synthase subunit HisF (Hydrogenobaculum sp. (strain Y04AAS1)).